Reading from the N-terminus, the 693-residue chain is MPEFLEDPSVLTKDKLKSELVANNVTLPAGEQRKDVYVQLYLQHLTARNRPPLAAGANSKGPPDFSSDEEREPTPVLGSGASVGRGRGAVGRKATKKTDKPRLEDKDDLDVTELSNEELLDQLVRYGVNPGPIVGTTRKLYEKKLLKLREQGTESRSSTPLPTVSSSAENTRQNGSNDSDRYSDNDEGKKKEHKKVKSARDCVPFSELASTPSGAFFQGISFPEISTRPPLGRTELQAAKKVQTTKRDPPRETCTDTALPGKGQTHKLAPGRSLFIPSESSYDRCVEKSSSPSSQREFAARLVSAAASPSLIRETTTTYSKDIVENICRGGKSRAQPLRAEEPGVSDQSVFSSEREVLQESERSQVISPPLAQAIRDYVNSLLVQGGVGSLPGTSDSVPTLDVENICKRLSQSSYQDSESLSPPRKVPRLSEKPARGGDSGSCVAFQNTPGSEHRSSFAKSVVSHSLTTLGVEVSKPPPQHDKIEASEPSFPLHESILKVVEEEWQQIDRQLPSVACRYPVSSIEAARILSVPKVDDEILGFISEATPRAATQASSTESCDKHLDLALCRSYEAAASALQIAAHTAFVAKSLQADISQAAQIINSDPSDAQQALRILNRTYDAASYLCDAAFDEVRMSACAMGSSTMGRRYLWLKDCKISPASKNKLTVAPFKGGTLFGGEVHKVIKKRGNKQ.

The region spanning 5 to 48 (LEDPSVLTKDKLKSELVANNVTLPAGEQRKDVYVQLYLQHLTAR) is the LEM-like domain. Disordered stretches follow at residues 48–113 (RNRP…DVTE), 148–211 (LREQ…LAST), and 227–270 (TRPP…KLAP). The interval 49–107 (NRPPLAAGANSKGPPDFSSDEEREPTPVLGSGASVGRGRGAVGRKATKKTDKPRLEDKD) is linker. Phosphoserine occurs at positions 59, 66, and 67. Residue Thr-74 is modified to Phosphothreonine. 2 positions are modified to phosphoserine: Ser-79 and Ser-82. Residues Arg-85 and Arg-87 each carry the omega-N-methylarginine modification. The segment covering 96–105 (KKTDKPRLED) has biased composition (basic and acidic residues). An LEM domain is found at 108-152 (DLDVTELSNEELLDQLVRYGVNPGPIVGTTRKLYEKKLLKLREQG). At Thr-153 the chain carries Phosphothreonine. A compositionally biased stretch (polar residues) spans 154–177 (ESRSSTPLPTVSSSAENTRQNGSN). Phosphoserine occurs at positions 155 and 158. A phosphothreonine mark is found at Thr-159 and Thr-163. Phosphoserine is present on residues Ser-165 and Ser-167. Positions 178–190 (DSDRYSDNDEGKK) are enriched in basic and acidic residues. Residues 190–196 (KKEHKKV) carry the Nuclear localization signal motif. Ser-206 carries the post-translational modification N6-acetyllysine. The segment covering 245–254 (TKRDPPRETC) has biased composition (basic and acidic residues). Phosphoserine is present on Ser-310. Arg-329 is subject to Omega-N-methylarginine. The segment at 332–351 (KSRAQPLRAEEPGVSDQSVF) is disordered. A phosphoserine mark is found at Ser-349, Ser-352, Ser-368, Ser-420, and Ser-422. The segment covering 412–422 (QSSYQDSESLS) has biased composition (low complexity). Residues 412–442 (QSSYQDSESLSPPRKVPRLSEKPARGGDSGS) are disordered. Residues 557-656 (TESCDKHLDL…MGRRYLWLKD (100 aa)) adopt a coiled-coil conformation. Lys-655 bears the N6-acetyllysine mark.

Belongs to the LEM family. Homooligomer. Interacts with LMNA, BANF1 and RB1 and with chromosomes. Associates directly or indirectly with lamins at specific cell-cycle stages. Interacts with CMTM6. Post-translationally, phosphorylated in a mitose-specific manner.

It is found in the nucleus. The protein resides in the chromosome. Its function is as follows. May be involved in the structural organization of the nucleus and in the post-mitotic nuclear assembly. Plays an important role, together with LMNA, in the nuclear anchorage of RB1. In Mus musculus (Mouse), this protein is Lamina-associated polypeptide 2, isoforms alpha/zeta (Tmpo).